We begin with the raw amino-acid sequence, 238 residues long: Inactive glycoside hydrolase XLP1 (238 aa).

Residues 1–19 (MKSFLIAIVIAVLLPVSAA) form the signal peptide. Residue Glu133 is part of the active site. N-linked (GlcNAc...) asparagine glycosylation is found at Asn171 and Asn187. Glu219 is a catalytic residue.

It belongs to the glycosyl hydrolase 12 (cellulase H) family. In terms of assembly, interacts with host apoplastic glucanase inhibitor GIP2.

It is found in the secreted. Non-functional secreted XEG1-like protein that binds to host Nicotiana benthamiana apoplastic glucanase inhibitor protein GIP2 more tightly than does XEG1, thus it outcompetes XEG1 for GIP2 binding and frees functional XEG1 to support P.parasitica infection. With XEG1, is required to elevate apoplastic sugar during P.parasitica infection. The protein is Inactive glycoside hydrolase XLP1 of Phytophthora nicotianae (strain INRA-310) (Phytophthora parasitica).